The primary structure comprises 856 residues: Subtilisin-like protease SBT2.2 (856 aa).

The first 21 residues, 1–21 (MRRVLMVNFGVLLLFCFGVLS), serve as a signal peptide directing secretion. A propeptide spans 22–159 (NSFGQDNGGD…IVLDFSVRTA (138 aa)) (activation peptide). N-linked (GlcNAc...) asparagine glycosylation is found at asparagine 35 and asparagine 85. The 120-residue stretch at 40 to 159 (VYIVTLRQAS…IVLDFSVRTA (120 aa)) folds into the Inhibitor I9 domain. Residues 164 to 709 (PQFMGLPKGA…NGFVNATAAL (546 aa)) enclose the Peptidase S8 domain. Aspartate 193 serves as the catalytic Charge relay system. 2 N-linked (GlcNAc...) asparagine glycosylation sites follow: asparagine 204 and asparagine 255. Residue histidine 269 is the Charge relay system of the active site. N-linked (GlcNAc...) asparagine glycosylation is found at asparagine 412, asparagine 441, asparagine 495, asparagine 540, and asparagine 568. The PA domain occupies 432-528 (MISALDALKN…MDMPGIIIPS (97 aa)). Serine 634 (charge relay system) is an active-site residue. 7 N-linked (GlcNAc...) asparagine glycosylation sites follow: asparagine 704, asparagine 730, asparagine 738, asparagine 748, asparagine 767, asparagine 782, and asparagine 823.

It belongs to the peptidase S8 family.

Its subcellular location is the secreted. The polypeptide is Subtilisin-like protease SBT2.2 (Arabidopsis thaliana (Mouse-ear cress)).